The sequence spans 119 residues: Large ribosomal subunit protein bL20 (119 aa).

This sequence belongs to the bacterial ribosomal protein bL20 family.

Its function is as follows. Binds directly to 23S ribosomal RNA and is necessary for the in vitro assembly process of the 50S ribosomal subunit. It is not involved in the protein synthesizing functions of that subunit. This Shewanella sediminis (strain HAW-EB3) protein is Large ribosomal subunit protein bL20.